Reading from the N-terminus, the 2157-residue chain is Mediator of RNA polymerase II transcription subunit 12-like protein (2157 aa).

The disordered stretch occupies residues methionine 1 to glutamine 31. Threonine 462 carries the post-translational modification Phosphothreonine. Basic and acidic residues predominate over residues glutamate 1437 to lysine 1456. Disordered stretches follow at residues glutamate 1437–serine 1461, arginine 1724–threonine 1807, and isoleucine 2040–phenylalanine 2157. Over residues threonine 1771–serine 1780 the composition is skewed to basic residues. Composition is skewed to low complexity over residues proline 2063–glutamine 2076, glutamine 2083–alanine 2101, and arginine 2116–glutamine 2136. Residues lysine 2137–valine 2148 show a composition bias toward polar residues.

It belongs to the Mediator complex subunit 12 family. As to quaternary structure, may be a component of the Mediator complex, which is known to be composed of MED1, MED4, MED6, MED7, MED8, MED9, MED10, MED11, MED12, MED13, MED13L, MED14, MED15, MED16, MED17, MED18, MED19, MED20, MED21, MED22, MED23, MED24, MED25, MED26, MED27, MED29, MED30, MED31, CCNC, CDK8 and CDC2L6/CDK11. The MED12, MED13, CCNC and CDK8 subunits form a distinct module termed the CDK8 module. Mediator containing the CDK8 module is less active than Mediator lacking this module in supporting transcriptional activation. Individual preparations of the Mediator complex lacking one or more distinct subunits have been variously termed ARC, CRSP, DRIP, PC2, SMCC and TRAP.

It is found in the nucleus. In terms of biological role, may be a component of the Mediator complex, a coactivator involved in the regulated transcription of nearly all RNA polymerase II-dependent genes. Mediator functions as a bridge to convey information from gene-specific regulatory proteins to the basal RNA polymerase II transcription machinery. Mediator is recruited to promoters by direct interactions with regulatory proteins and serves as a scaffold for the assembly of a functional preinitiation complex with RNA polymerase II and the general transcription factors. This chain is Mediator of RNA polymerase II transcription subunit 12-like protein (Med12l), found in Mus musculus (Mouse).